A 248-amino-acid chain; its full sequence is MADS-box transcription factor 8 (248 aa).

One can recognise an MADS-box domain in the interval 1–61 (MGRGRVELKR…GKLYEFCSGQ (61 aa)). In terms of domain architecture, K-box spans 90–180 (VQSSRNEYLK…RRKLEESNQL (91 aa)).

May interact with the K-box of MADS6 and MADS16. May interact with MADS13 and MADS18. Binds to FCA. Expressed in lodicules, stamens and carpels.

The protein localises to the nucleus. Functionally, probable transcription factor. May be involved in the control of flowering time. In Oryza sativa subsp. japonica (Rice), this protein is MADS-box transcription factor 8 (MADS8).